The primary structure comprises 196 residues: NADPH:quinone oxidoreductase (196 aa).

The protein belongs to the SsuE family. As to quaternary structure, homotetramer. It depends on FMN as a cofactor.

The protein resides in the cell membrane. It catalyses the reaction a quinone + NADH + H(+) = a quinol + NAD(+). The enzyme catalyses a quinone + NADPH + H(+) = a quinol + NADP(+). In terms of biological role, the enzyme apparently serves as a quinone reductase in connection with conjugation reactions of hydroquinones involved in detoxification pathways. In Arabidopsis thaliana (Mouse-ear cress), this protein is NADPH:quinone oxidoreductase (NQR).